A 104-amino-acid polypeptide reads, in one-letter code: L-rhamnose mutarotase (104 aa).

Y18 contacts substrate. H22 functions as the Proton donor in the catalytic mechanism. Substrate contacts are provided by residues Y41 and 76–77 (WW).

It belongs to the rhamnose mutarotase family. Homodimer.

It is found in the cytoplasm. The catalysed reaction is alpha-L-rhamnose = beta-L-rhamnose. The protein operates within carbohydrate metabolism; L-rhamnose metabolism. In terms of biological role, involved in the anomeric conversion of L-rhamnose. The chain is L-rhamnose mutarotase from Citrobacter koseri (strain ATCC BAA-895 / CDC 4225-83 / SGSC4696).